The following is a 185-amino-acid chain: Photosystem I assembly protein Ycf4 (185 aa).

The next 2 helical transmembrane spans lie at 22–42 and 57–77; these read FFFASILFGGALGFFLVGFSS and IIFVPQGIVMCFYGIAGLFFS.

This sequence belongs to the Ycf4 family.

The protein localises to the plastid. Its subcellular location is the chloroplast thylakoid membrane. In terms of biological role, seems to be required for the assembly of the photosystem I complex. The chain is Photosystem I assembly protein Ycf4 from Welwitschia mirabilis (Tree tumbo).